The sequence spans 248 residues: 2,3-bisphosphoglycerate-dependent phosphoglycerate mutase (248 aa).

Residues 8 to 15 (RHGESLWN), 21 to 22 (TG), Arg60, 87 to 90 (ERHY), Lys98, 114 to 115 (RR), and 183 to 184 (GN) each bind substrate. His9 (tele-phosphohistidine intermediate) is an active-site residue. Catalysis depends on Glu87, which acts as the Proton donor/acceptor.

The protein belongs to the phosphoglycerate mutase family. BPG-dependent PGAM subfamily.

It catalyses the reaction (2R)-2-phosphoglycerate = (2R)-3-phosphoglycerate. Its pathway is carbohydrate degradation; glycolysis; pyruvate from D-glyceraldehyde 3-phosphate: step 3/5. In terms of biological role, catalyzes the interconversion of 2-phosphoglycerate and 3-phosphoglycerate. In Methanospirillum hungatei JF-1 (strain ATCC 27890 / DSM 864 / NBRC 100397 / JF-1), this protein is 2,3-bisphosphoglycerate-dependent phosphoglycerate mutase.